A 232-amino-acid chain; its full sequence is C4-dicarboxylate TRAP transporter small permease protein DctQ (232 aa).

Helical transmembrane passes span 30–50, 58–78, 103–123, and 167–187; these read EFLI…NVIM, ILWA…VGAS, LYAL…LIGS, and FIPY…FLQI.

This sequence belongs to the TRAP transporter small permease family. The complex comprises the extracytoplasmic solute receptor protein DctP, and the two transmembrane proteins DctQ and DctM.

It localises to the cell inner membrane. In terms of biological role, part of the tripartite ATP-independent periplasmic (TRAP) transport system DctPQM involved in C4-dicarboxylates uptake. This Vibrio cholerae serotype O1 (strain ATCC 39315 / El Tor Inaba N16961) protein is C4-dicarboxylate TRAP transporter small permease protein DctQ.